The following is an 80-amino-acid chain: MPTKKNNFEEQLNSLEKIVTNLENGNVPLEDALKEFQEGVKISRELDKKLTSAEEIVAKLIDSDGTEHKLDPNNAAAPED.

It belongs to the XseB family. In terms of assembly, heterooligomer composed of large and small subunits.

It localises to the cytoplasm. The catalysed reaction is Exonucleolytic cleavage in either 5'- to 3'- or 3'- to 5'-direction to yield nucleoside 5'-phosphates.. Bidirectionally degrades single-stranded DNA into large acid-insoluble oligonucleotides, which are then degraded further into small acid-soluble oligonucleotides. The polypeptide is Exodeoxyribonuclease 7 small subunit (Lactobacillus helveticus (strain DPC 4571)).